We begin with the raw amino-acid sequence, 200 residues long: FMN-dependent NADH:quinone oxidoreductase 2 (200 aa).

135–138 is an FMN binding site; that stretch reads SRGG.

This sequence belongs to the azoreductase type 1 family. As to quaternary structure, homodimer. Requires FMN as cofactor.

It carries out the reaction 2 a quinone + NADH + H(+) = 2 a 1,4-benzosemiquinone + NAD(+). The catalysed reaction is N,N-dimethyl-1,4-phenylenediamine + anthranilate + 2 NAD(+) = 2-(4-dimethylaminophenyl)diazenylbenzoate + 2 NADH + 2 H(+). Its function is as follows. Quinone reductase that provides resistance to thiol-specific stress caused by electrophilic quinones. Also exhibits azoreductase activity. Catalyzes the reductive cleavage of the azo bond in aromatic azo compounds to the corresponding amines. The polypeptide is FMN-dependent NADH:quinone oxidoreductase 2 (Clostridium acetobutylicum (strain ATCC 824 / DSM 792 / JCM 1419 / IAM 19013 / LMG 5710 / NBRC 13948 / NRRL B-527 / VKM B-1787 / 2291 / W)).